Reading from the N-terminus, the 178-residue chain is Caveolin-1 (178 aa).

Ser-2 bears the N-acetylserine mark. A Phosphoserine modification is found at Ser-2. The segment at 2-94 (SGGKYVDSEG…WKASFTTFTV (93 aa)) is required for homooligomerization. Topologically, residues 2–104 (SGGKYVDSEG…TKYWFYRLLS (103 aa)) are cytoplasmic. Lys-5 is subject to N6-acetyllysine; alternate. Lys-5 participates in a covalent cross-link: Glycyl lysine isopeptide (Lys-Gly) (interchain with G-Cter in ubiquitin); alternate. Residue Tyr-6 is modified to Phosphotyrosine. Ser-9 is subject to Phosphoserine. At Tyr-14 the chain carries Phosphotyrosine; by ABL1. Residue Tyr-25 is modified to Phosphotyrosine. Residues Lys-26 and Lys-30 each participate in a glycyl lysine isopeptide (Lys-Gly) (interchain with G-Cter in ubiquitin) cross-link. At Ser-37 the chain carries Phosphoserine. Glycyl lysine isopeptide (Lys-Gly) (interchain with G-Cter in ubiquitin) cross-links involve residues Lys-39, Lys-47, and Lys-57. Residues 82–94 (DGIWKASFTTFTV) form an interaction with CAVIN3 region. An intramembrane region (helical) is located at residues 105–125 (ALFGIPMALVWGIYFAILSFL). The Cytoplasmic portion of the chain corresponds to 126–178 (HIWAVVPCIKSFLIEIQCISRVYSIYVHTVCDPLFEAVGKIFSNVRINLQKEI). The tract at residues 131–142 (VPCIKSFLIEIQ) is interacts with SPRY1, SPRY2, SPRY3 and SPRY4. Residues Cys-133, Cys-143, and Cys-156 are each lipidated (S-palmitoyl cysteine). An interacts with SPRY1, SPRY2, and SPRY4 region spans residues 149-160 (SIYVHTVCDPLF). The tract at residues 167 to 178 (FSNVRINLQKEI) is interacts with SPRY1, SPRY2, SPRY3 and SPRY4.

It belongs to the caveolin family. Homooligomer. Interacts with GLIPR2. Interacts with NOSTRIN. Interacts with SNAP25 and STX1A. Interacts (via the N-terminus) with DPP4; the interaction is direct. Interacts with CTNNB1, CDH1 and JUP. Interacts with PACSIN2; this interaction induces membrane tubulation. Interacts with SLC7A9. Interacts with BMX and BTK. Interacts with TGFBR1. Interacts with CAVIN3 (via leucine-zipper domain) in a cholesterol-sensitive manner. Interacts with CAVIN1. Interacts with EHD2 in a cholesterol-dependent manner. Forms a ternary complex with UBXN6 and VCP; mediates CAV1 targeting to lysosomes for degradation. Interacts with ABCG1; this interaction regulates ABCG1-mediated cholesterol efflux. Interacts with NEU3; this interaction enhances NEU3 sialidase activity within caveola. Interacts (via C-terminus) with SPRY1, SPRY2 (via C-terminus), SPRY3, and SPRY4. Interacts with IGFBP5; this interaction allows trafficking of IGFBP5 from the plasma membrane to the nucleus. Post-translationally, phosphorylated at Tyr-14 by ABL1 in response to oxidative stress. In terms of processing, ubiquitinated. Undergo monoubiquitination and multi- and/or polyubiquitination. Monoubiquitination of N-terminal lysines promotes integration in a ternary complex with UBXN6 and VCP which promotes oligomeric CAV1 targeting to lysosomes for degradation. Ubiquitinated by ZNRF1; leading to degradation and modulation of the TLR4-mediated immune response.

The protein resides in the golgi apparatus membrane. Its subcellular location is the cell membrane. It is found in the membrane. It localises to the caveola. The protein localises to the membrane raft. In terms of biological role, may act as a scaffolding protein within caveolar membranes. Forms a stable heterooligomeric complex with CAV2 that targets to lipid rafts and drives caveolae formation. Mediates the recruitment of CAVIN proteins (CAVIN1/2/3/4) to the caveolae. Interacts directly with G-protein alpha subunits and can functionally regulate their activity. Involved in the costimulatory signal essential for T-cell receptor (TCR)-mediated T-cell activation. Its binding to DPP4 induces T-cell proliferation and NF-kappa-B activation in a T-cell receptor/CD3-dependent manner. Recruits CTNNB1 to caveolar membranes and may regulate CTNNB1-mediated signaling through the Wnt pathway. Negatively regulates TGFB1-mediated activation of SMAD2/3 by mediating the internalization of TGFBR1 from membrane rafts leading to its subsequent degradation. Binds 20(S)-hydroxycholesterol (20(S)-OHC). In Papio anubis (Olive baboon), this protein is Caveolin-1 (CAV1).